We begin with the raw amino-acid sequence, 334 residues long: Chemotactic signal transduction system substrate-binding protein CosB (334 aa).

Residues 1-29 form the signal peptide; the sequence is MMDTPEHASTSSRRQLLGMLAAGGTTAVA.

Belongs to the OsmX family.

It is found in the cell membrane. Functionally, mediates chemotaxis towards compatible osmolytes. May function as a receptor that binds the osmolytes and transduces a signal to CosT. Has probably no additional role in transport. In Halobacterium salinarum (strain ATCC 29341 / DSM 671 / R1), this protein is Chemotactic signal transduction system substrate-binding protein CosB (cosB).